The primary structure comprises 585 residues: Arginine--tRNA ligase (585 aa).

The 'HIGH' region signature appears at 126 to 136 (PNIAKEMHVGH).

This sequence belongs to the class-I aminoacyl-tRNA synthetase family. Monomer.

The protein localises to the cytoplasm. It carries out the reaction tRNA(Arg) + L-arginine + ATP = L-arginyl-tRNA(Arg) + AMP + diphosphate. The chain is Arginine--tRNA ligase from Crocosphaera subtropica (strain ATCC 51142 / BH68) (Cyanothece sp. (strain ATCC 51142)).